The chain runs to 189 residues: Glycerol-3-phosphate acyltransferase (189 aa).

5 helical membrane-spanning segments follow: residues Met1–Leu21, Lys50–Ala70, Leu77–Phe97, Met111–Phe131, and Leu151–Val171.

The protein belongs to the PlsY family. As to quaternary structure, probably interacts with PlsX.

It is found in the cell inner membrane. The enzyme catalyses an acyl phosphate + sn-glycerol 3-phosphate = a 1-acyl-sn-glycero-3-phosphate + phosphate. Its pathway is lipid metabolism; phospholipid metabolism. Its function is as follows. Catalyzes the transfer of an acyl group from acyl-phosphate (acyl-PO(4)) to glycerol-3-phosphate (G3P) to form lysophosphatidic acid (LPA). This enzyme utilizes acyl-phosphate as fatty acyl donor, but not acyl-CoA or acyl-ACP. This chain is Glycerol-3-phosphate acyltransferase, found in Pseudomonas putida (strain ATCC 700007 / DSM 6899 / JCM 31910 / BCRC 17059 / LMG 24140 / F1).